Reading from the N-terminus, the 231-residue chain is MSQTPKHIISIVPAAGIGSRMGAEIPKQYLQLNEQSILGHTLDCLLSHPSIEKVIVALNPEDEFFARLPQAQHAKLQAVIGGKERADSVLSALTVAPTDAWALVHDAARPCLNHQDIDKLIESASSFPQGAILGAPVRDTMKRSNAQGLITETVCREKLWHALTPQFFPVQNLKQNLSNALAAGALITDEASAMEWAGVAPGIVAGRADNIKVTHPDDLQLASLFLKSAAQ.

Belongs to the IspD/TarI cytidylyltransferase family. IspD subfamily.

The catalysed reaction is 2-C-methyl-D-erythritol 4-phosphate + CTP + H(+) = 4-CDP-2-C-methyl-D-erythritol + diphosphate. Its pathway is isoprenoid biosynthesis; isopentenyl diphosphate biosynthesis via DXP pathway; isopentenyl diphosphate from 1-deoxy-D-xylulose 5-phosphate: step 2/6. In terms of biological role, catalyzes the formation of 4-diphosphocytidyl-2-C-methyl-D-erythritol from CTP and 2-C-methyl-D-erythritol 4-phosphate (MEP). This Shewanella pealeana (strain ATCC 700345 / ANG-SQ1) protein is 2-C-methyl-D-erythritol 4-phosphate cytidylyltransferase.